The primary structure comprises 356 residues: Protein pelota homolog (356 aa).

Belongs to the eukaryotic release factor 1 family. Pelota subfamily. Monomer. A divalent metal cation serves as cofactor.

Its subcellular location is the cytoplasm. In terms of biological role, may function in recognizing stalled ribosomes, interact with stem-loop structures in stalled mRNA molecules, and effect endonucleolytic cleavage of the mRNA. May play a role in the release non-functional ribosomes and degradation of damaged mRNAs. Has endoribonuclease activity. This Pyrococcus furiosus (strain ATCC 43587 / DSM 3638 / JCM 8422 / Vc1) protein is Protein pelota homolog.